We begin with the raw amino-acid sequence, 91 residues long: MARITVEDALKVAGNRFALVLLAVQRSKQLLRGARPLTNVRNNREIVAALREIADNKVYFSHPEYLMGAKEDFKLIADDTTEFIGDEDYVE.

It belongs to the RNA polymerase subunit omega family. As to quaternary structure, the RNAP catalytic core consists of 2 alpha, 1 beta, 1 beta' and 1 omega subunit. When a sigma factor is associated with the core the holoenzyme is formed, which can initiate transcription.

It carries out the reaction RNA(n) + a ribonucleoside 5'-triphosphate = RNA(n+1) + diphosphate. Functionally, promotes RNA polymerase assembly. Latches the N- and C-terminal regions of the beta' subunit thereby facilitating its interaction with the beta and alpha subunits. This chain is DNA-directed RNA polymerase subunit omega, found in Syntrophus aciditrophicus (strain SB).